The primary structure comprises 114 residues: Small ribosomal subunit protein bS16 (114 aa).

Residues 87–114 form a disordered region; it reads AFREQPVQSAPKKKAQERAAERAKAAEA. Residues 100-114 are compositionally biased toward basic and acidic residues; the sequence is KAQERAAERAKAAEA.

This sequence belongs to the bacterial ribosomal protein bS16 family.

The chain is Small ribosomal subunit protein bS16 from Acidiphilium cryptum (strain JF-5).